We begin with the raw amino-acid sequence, 274 residues long: 2,3,4,5-tetrahydropyridine-2,6-dicarboxylate N-succinyltransferase (274 aa).

2 residues coordinate substrate: Arg-106 and Asp-143.

Belongs to the transferase hexapeptide repeat family. As to quaternary structure, homotrimer.

The protein localises to the cytoplasm. The catalysed reaction is (S)-2,3,4,5-tetrahydrodipicolinate + succinyl-CoA + H2O = (S)-2-succinylamino-6-oxoheptanedioate + CoA. Its pathway is amino-acid biosynthesis; L-lysine biosynthesis via DAP pathway; LL-2,6-diaminopimelate from (S)-tetrahydrodipicolinate (succinylase route): step 1/3. The chain is 2,3,4,5-tetrahydropyridine-2,6-dicarboxylate N-succinyltransferase from Paracidovorax citrulli (strain AAC00-1) (Acidovorax citrulli).